Consider the following 1101-residue polypeptide: Rho guanine nucleotide exchange factor gef2 (1101 aa).

A disordered region spans residues 203–222 (EDSRKKTSSPSPSFASSKDA). Positions 210-219 (SSPSPSFASS) are enriched in low complexity. The DH domain occupies 230–428 (KKKSLLIEMM…KNIAEMPTVD (199 aa)). Ser-736 and Ser-977 each carry phosphoserine.

Its subcellular location is the cytoplasm. The protein resides in the cytoskeleton. It is found in the microtubule organizing center. It localises to the spindle pole body. Functionally, has a role in the control of cell polarity and cytokinesis. Involved in bipolar growth and septum formation. The protein is Rho guanine nucleotide exchange factor gef2 (gef2) of Schizosaccharomyces pombe (strain 972 / ATCC 24843) (Fission yeast).